The following is an 89-amino-acid chain: Transcriptional regulator WhiB2 (89 aa).

The span at 1-15 (MVPEAPAPFEEPLPP) shows a compositional bias: pro residues. The interval 1-24 (MVPEAPAPFEEPLPPEATDQWQDR) is disordered. In terms of domain architecture, 4Fe-4S Wbl-type spans 26–83 (LCAQTDPEAFFPEKGGSTREAKKICMGCEVRHECLEYALAHDERFGIWGGLSERERRR). Residue Cys27 coordinates [4Fe-4S] cluster. The residue at position 42 (Ser42) is a Phosphoserine. [4Fe-4S] cluster-binding residues include Cys50, Cys53, and Cys59.

It belongs to the WhiB family. It depends on [4Fe-4S] cluster as a cofactor. In terms of processing, may be phosphorylated, possibly on Ser-42. Post-translationally, the cluster is degraded quickly in the presence of air. Upon cluster removal intramolecular disulfide bonds are formed. The Fe-S cluster can be nitrosylated by nitric oxide (NO).

It is found in the cytoplasm. In terms of biological role, acts as a transcriptional regulator. Probably redox-responsive. The apo- but not holo-form probably binds DNA. Its function is as follows. The apo-form functions as a chaperone, preventing aggregation or helping in correct refolding of a number of substrates; this activity does not require ATP or the ability to bind a Fe-S cluster. Chaperone activity is insensitive to the redox state of its cysteine residues. The apo-form has no protein disulfide reductase activity. The apo-form binds to its own promoter. The chain is Transcriptional regulator WhiB2 (whiB2) from Mycobacterium tuberculosis (strain ATCC 25618 / H37Rv).